A 68-amino-acid chain; its full sequence is Putative membrane protein insertion efficiency factor (68 aa).

Belongs to the UPF0161 family.

It is found in the cell membrane. Functionally, could be involved in insertion of integral membrane proteins into the membrane. The protein is Putative membrane protein insertion efficiency factor of Syntrophomonas wolfei subsp. wolfei (strain DSM 2245B / Goettingen).